Here is a 534-residue protein sequence, read N- to C-terminus: MTKYIFVTGGVVSSIGKGIVAASLGRLLKNRGLKVTIQKFDPYINIDPGTMSPYQHGEVYVTDDGAETDLDLGHYERFIDINLNKYSNVTTGKIYSEVLRKERKGEYLGATVQVIPHITDALKEKIKRAASTTDSDVIITEVGGTVGDIESLPFLEALRQMKTDVGSENVMYIHTTLLPYLKAAGEMKTKPTQHSVKELRGLGIQPNMLVIRTEEPVEQGIKNKLAQFCDVNSEAVIESRDVEHLYQIPLNLQAQSMDQIVCDHLKLNAPQADMTEWSAMVDKVMNLRKTTKIALVGKYVELPDAYLSVVEALKHSGYANDTAIDLKWVNANDVTVDNAADLLGDADGIIVPGGFGQRGTEGKIQAIRYARENDVPMLGICLGMQLTCVEFARHVLNMEGANSFELEPSTKYPIIDIMRDQIDIEDMGGTLRLGLYPCKLKPGSKAAMAYNNQEVVQRRHRHRYEFNNKFRPEFEAAGFVFSGVSPDNRLVEIVELKEKKFFVAAQYHPELQSRPNRPEELYTAFVTAAIKNSN.

Residues 1–267 (MTKYIFVTGG…DQIVCDHLKL (267 aa)) form an amidoligase domain region. Ser13 contributes to the CTP binding site. Position 13 (Ser13) interacts with UTP. An ATP-binding site is contributed by 14 to 19 (SIGKGI). Tyr54 provides a ligand contact to L-glutamine. Asp71 contacts ATP. 2 residues coordinate Mg(2+): Asp71 and Glu141. CTP-binding positions include 148–150 (DIE), 188–193 (KTKPTQ), and Lys224. UTP-binding positions include 188-193 (KTKPTQ) and Lys224. 240 to 242 (RDV) contributes to the ATP binding site. A Glutamine amidotransferase type-1 domain is found at 292 to 534 (KIALVGKYVE…FVTAAIKNSN (243 aa)). Position 354 (Gly354) interacts with L-glutamine. The active-site Nucleophile; for glutamine hydrolysis is Cys381. Residues 382–385 (LGMQ), Glu405, and Arg463 each bind L-glutamine. Active-site residues include His508 and Glu510.

This sequence belongs to the CTP synthase family. Homotetramer.

It catalyses the reaction UTP + L-glutamine + ATP + H2O = CTP + L-glutamate + ADP + phosphate + 2 H(+). The catalysed reaction is L-glutamine + H2O = L-glutamate + NH4(+). The enzyme catalyses UTP + NH4(+) + ATP = CTP + ADP + phosphate + 2 H(+). It participates in pyrimidine metabolism; CTP biosynthesis via de novo pathway; CTP from UDP: step 2/2. With respect to regulation, allosterically activated by GTP, when glutamine is the substrate; GTP has no effect on the reaction when ammonia is the substrate. The allosteric effector GTP functions by stabilizing the protein conformation that binds the tetrahedral intermediate(s) formed during glutamine hydrolysis. Inhibited by the product CTP, via allosteric rather than competitive inhibition. In terms of biological role, catalyzes the ATP-dependent amination of UTP to CTP with either L-glutamine or ammonia as the source of nitrogen. Regulates intracellular CTP levels through interactions with the four ribonucleotide triphosphates. In Streptococcus pyogenes serotype M2 (strain MGAS10270), this protein is CTP synthase.